The primary structure comprises 117 residues: Large ribosomal subunit protein bL19 (117 aa).

It belongs to the bacterial ribosomal protein bL19 family.

This protein is located at the 30S-50S ribosomal subunit interface and may play a role in the structure and function of the aminoacyl-tRNA binding site. This chain is Large ribosomal subunit protein bL19, found in Colwellia psychrerythraea (strain 34H / ATCC BAA-681) (Vibrio psychroerythus).